The following is a 160-amino-acid chain: SsrA-binding protein (160 aa).

It belongs to the SmpB family.

It is found in the cytoplasm. In terms of biological role, required for rescue of stalled ribosomes mediated by trans-translation. Binds to transfer-messenger RNA (tmRNA), required for stable association of tmRNA with ribosomes. tmRNA and SmpB together mimic tRNA shape, replacing the anticodon stem-loop with SmpB. tmRNA is encoded by the ssrA gene; the 2 termini fold to resemble tRNA(Ala) and it encodes a 'tag peptide', a short internal open reading frame. During trans-translation Ala-aminoacylated tmRNA acts like a tRNA, entering the A-site of stalled ribosomes, displacing the stalled mRNA. The ribosome then switches to translate the ORF on the tmRNA; the nascent peptide is terminated with the 'tag peptide' encoded by the tmRNA and targeted for degradation. The ribosome is freed to recommence translation, which seems to be the essential function of trans-translation. The polypeptide is SsrA-binding protein (Yersinia pseudotuberculosis serotype O:1b (strain IP 31758)).